A 253-amino-acid chain; its full sequence is Imidazole glycerol phosphate synthase subunit HisF (253 aa).

Catalysis depends on residues D11 and D130.

It belongs to the HisA/HisF family. In terms of assembly, heterodimer of HisH and HisF.

The protein localises to the cytoplasm. It catalyses the reaction 5-[(5-phospho-1-deoxy-D-ribulos-1-ylimino)methylamino]-1-(5-phospho-beta-D-ribosyl)imidazole-4-carboxamide + L-glutamine = D-erythro-1-(imidazol-4-yl)glycerol 3-phosphate + 5-amino-1-(5-phospho-beta-D-ribosyl)imidazole-4-carboxamide + L-glutamate + H(+). The protein operates within amino-acid biosynthesis; L-histidine biosynthesis; L-histidine from 5-phospho-alpha-D-ribose 1-diphosphate: step 5/9. Its function is as follows. IGPS catalyzes the conversion of PRFAR and glutamine to IGP, AICAR and glutamate. The HisF subunit catalyzes the cyclization activity that produces IGP and AICAR from PRFAR using the ammonia provided by the HisH subunit. The sequence is that of Imidazole glycerol phosphate synthase subunit HisF from Caldanaerobacter subterraneus subsp. tengcongensis (strain DSM 15242 / JCM 11007 / NBRC 100824 / MB4) (Thermoanaerobacter tengcongensis).